The chain runs to 848 residues: Alanine--tRNA ligase (848 aa).

Residues histidine 553, histidine 557, cysteine 654, and histidine 658 each contribute to the Zn(2+) site.

The protein belongs to the class-II aminoacyl-tRNA synthetase family. Requires Zn(2+) as cofactor.

The protein localises to the cytoplasm. The catalysed reaction is tRNA(Ala) + L-alanine + ATP = L-alanyl-tRNA(Ala) + AMP + diphosphate. Catalyzes the attachment of alanine to tRNA(Ala) in a two-step reaction: alanine is first activated by ATP to form Ala-AMP and then transferred to the acceptor end of tRNA(Ala). Also edits incorrectly charged Ser-tRNA(Ala) and Gly-tRNA(Ala) via its editing domain. This is Alanine--tRNA ligase from Neorickettsia sennetsu (strain ATCC VR-367 / Miyayama) (Ehrlichia sennetsu).